Consider the following 438-residue polypeptide: Adenylosuccinate synthetase (438 aa).

Residues 13–19 (GDEGKGK) and 41–43 (GHT) each bind GTP. Asp-14 acts as the Proton acceptor in catalysis. Mg(2+) contacts are provided by Asp-14 and Gly-41. Residues 14–17 (DEGK), 39–42 (NAGH), Thr-130, Arg-144, Gln-225, Thr-240, and Arg-310 contribute to the IMP site. Residue His-42 is the Proton donor of the active site. Substrate is bound at residue 306–312 (ATTGRLR). Residues Arg-312, 338 to 340 (KLD), and 421 to 423 (STG) each bind GTP.

Belongs to the adenylosuccinate synthetase family. Homodimer. Mg(2+) is required as a cofactor.

Its subcellular location is the cytoplasm. The enzyme catalyses IMP + L-aspartate + GTP = N(6)-(1,2-dicarboxyethyl)-AMP + GDP + phosphate + 2 H(+). It functions in the pathway purine metabolism; AMP biosynthesis via de novo pathway; AMP from IMP: step 1/2. In terms of biological role, plays an important role in the de novo pathway of purine nucleotide biosynthesis. Catalyzes the first committed step in the biosynthesis of AMP from IMP. The protein is Adenylosuccinate synthetase of Aliivibrio fischeri (strain ATCC 700601 / ES114) (Vibrio fischeri).